Consider the following 162-residue polypeptide: NRR repressor homolog 3 (162 aa).

Residues 1-80 (MDPTMPTPHT…GHEEEARDED (80 aa)) form a disordered region. Over residues 7-24 (TPHTISGTSPFPRNSSTA) the composition is skewed to polar residues. A compositionally biased stretch (basic residues) spans 37 to 46 (PRHRRSRKRD). Positions 69–80 (GHGHEEEARDED) are enriched in basic and acidic residues.

It belongs to the NPR1-interactor family. As to quaternary structure, interacts with NPR1/NH1. Interacts with NPR3/NH3.

The protein resides in the nucleus. In terms of biological role, binds to and represses NPR1/NH1-mediated transcriptional activation of LG2 in vitro. The polypeptide is NRR repressor homolog 3 (Oryza sativa subsp. japonica (Rice)).